A 264-amino-acid polypeptide reads, in one-letter code: NAD kinase 1 (264 aa).

Catalysis depends on Asp45, which acts as the Proton acceptor. NAD(+)-binding positions include 45–46 (DG), 122–123 (NE), Arg148, Asp150, 161–166 (TAYNKS), and Ala185.

Belongs to the NAD kinase family. It depends on a divalent metal cation as a cofactor.

The protein resides in the cytoplasm. It carries out the reaction NAD(+) + ATP = ADP + NADP(+) + H(+). Its function is as follows. Involved in the regulation of the intracellular balance of NAD and NADP, and is a key enzyme in the biosynthesis of NADP. Catalyzes specifically the phosphorylation on 2'-hydroxyl of the adenosine moiety of NAD to yield NADP. The polypeptide is NAD kinase 1 (Listeria innocua serovar 6a (strain ATCC BAA-680 / CLIP 11262)).